Reading from the N-terminus, the 481-residue chain is WD repeat-containing protein 55 homolog (481 aa).

The disordered stretch occupies residues 1-116; that stretch reads MHTHNHFKTP…NRDVETNFDL (116 aa). Acidic residues-rich tracts occupy residues 12–23, 31–46, and 68–81; these read DAEEVDDLDDEM, IEQE…DDGF, and DSFD…DSDD. WD repeat units follow at residues 144-183, 188-227, 231-269, 272-311, 314-353, and 398-437; these read KLED…NKLI, VHSK…LKKL, AHDD…HVFE, QIDD…LYVQ, PYEE…YHCD, and QHNM…DFGD.

The protein belongs to the WD repeat WDR55 family.

In Drosophila ananassae (Fruit fly), this protein is WD repeat-containing protein 55 homolog.